A 235-amino-acid polypeptide reads, in one-letter code: Large ribosomal subunit protein uL3 (235 aa).

A disordered region spans residues A150–E189.

It belongs to the universal ribosomal protein uL3 family. As to quaternary structure, part of the 50S ribosomal subunit. Forms a cluster with proteins L14 and L19.

Its function is as follows. One of the primary rRNA binding proteins, it binds directly near the 3'-end of the 23S rRNA, where it nucleates assembly of the 50S subunit. This is Large ribosomal subunit protein uL3 from Protochlamydia amoebophila (strain UWE25).